Consider the following 413-residue polypeptide: MDRHLCICREIQLRSGLLFPFLLLMMLADLALPAQRHPPVVLVPGDLGNQLEAKLDKPKVVHYLCSKRTDSYFTLWLNLELLLPVIIDCWIDNIRLVYNRTSRTTQFPDGVDVRVPGFGETFSLEFLDPSKRNVGSYFYTMVESLVGWGYTRGEDVRGAPYDWRRAPNENGPYFLALQEMIEEMYQMYGGPVVLVAHSMGNMYMLYFLQRQPQAWKDKYIQAFVSLGAPWGGVAKTLRVLASGDNNRIPVIGPLKIREQQRSAVSTSWLLPYNHTWSHEKVFVYTPTANYTLRDYHRFFQDIGFEDGWFMRQDTQGLVEALVPPGVELHCLYGTGVPTPNSFYYENFPDRDPKICFGDGDGTVNLESVLQCQAWQSRQEHKVSLQELPGSEHIEMLANATTLAYLKRVLLEEP.

The N-terminal stretch at 1-33 (MDRHLCICREIQLRSGLLFPFLLLMMLADLALP) is a signal peptide. Asp-46 provides a ligand contact to substrate. Cys-65 and Cys-89 are disulfide-bonded. Asn-99 carries an N-linked (GlcNAc...) asparagine glycan. Residue Ser-198 is the Acyl-ester intermediate of the active site. Position 198 (Ser-198) interacts with Zn(2+). Met-199 is a substrate binding site. Asn-273 and Asn-289 each carry an N-linked (GlcNAc...) asparagine glycan. Residue Cys-355 participates in Zn(2+) binding. Residues Asp-360 and His-392 each act as charge relay system in the active site. His-392 contributes to the Zn(2+) binding site. An N-linked (GlcNAc...) asparagine glycan is attached at Asn-398.

Belongs to the AB hydrolase superfamily. Lipase family. In terms of processing, N-glycosylated. N-glycosylation is important for maturation of the enzyme and normal subcellular location. As to expression, detected in alveolar macrophages (at protein level). Widely expressed. Expressed at highest levels in alveolar macrophages.

The protein resides in the lysosome. It localises to the secreted. It is found in the membrane. The catalysed reaction is a 1,2-diacyl-sn-glycero-3-phosphocholine + H2O = a 2-acyl-sn-glycero-3-phosphocholine + a fatty acid + H(+). It carries out the reaction 1,2-dihexadecanoyl-sn-glycero-3-phosphocholine + H2O = 2-hexadecanoyl-sn-glycero-3-phosphocholine + hexadecanoate + H(+). It catalyses the reaction 1-hexadecanoyl-2-(9Z-octadecenoyl)-sn-glycero-3-phosphocholine + H2O = 2-(9Z-octadecenoyl)-sn-glycero-3-phosphocholine + hexadecanoate + H(+). The enzyme catalyses 1,2-di-(9Z-octadecenoyl)-sn-glycero-3-phosphocholine + H2O = 2-(9Z-octadecenoyl)-sn-glycero-3-phosphocholine + (9Z)-octadecenoate + H(+). The catalysed reaction is 1-hexadecanoyl-2-glutaroyl-sn-glycero-3-phosphocholine + H2O = 2-glutaroyl-sn-glycero-3-phosphocholine + hexadecanoate + H(+). It carries out the reaction 1-hexadecanoyl-2-nonadioyl-sn-glycero-3-phosphocholine + H2O = 2-nonadioyl-sn-glycero-3-phosphocholine + hexadecanoate + H(+). It catalyses the reaction 1-hexadecanoyl-2-(5-oxopentanoyl)-sn-glycero-3-phosphocholine + H2O = 2-(5-oxopentanoyl)-sn-glycero-3-phosphocholine + hexadecanoate + H(+). The enzyme catalyses 1-hexadecanoyl-2-(9-oxononanoyl)-sn-glycero-3-phosphocholine + H2O = 2-(9-oxononanoyl)-sn-glycero-3-phosphocholine + hexadecanoate + H(+). The catalysed reaction is a 1,2-diacyl-sn-glycero-3-phosphocholine + H2O = a 1-acyl-sn-glycero-3-phosphocholine + a fatty acid + H(+). It carries out the reaction 1,2-dihexadecanoyl-sn-glycero-3-phosphocholine + H2O = 1-hexadecanoyl-sn-glycero-3-phosphocholine + hexadecanoate + H(+). It catalyses the reaction 1-hexadecanoyl-2-(9Z-octadecenoyl)-sn-glycero-3-phosphocholine + H2O = 1-hexadecanoyl-sn-glycero-3-phosphocholine + (9Z)-octadecenoate + H(+). The enzyme catalyses 1,2-di-(9Z-octadecenoyl)-sn-glycero-3-phosphocholine + H2O = 1-(9Z-octadecenoyl)-sn-glycero-3-phosphocholine + (9Z)-octadecenoate + H(+). The catalysed reaction is a 1-acyl-sn-glycero-3-phosphocholine + H2O = sn-glycerol 3-phosphocholine + a fatty acid + H(+). It carries out the reaction 1-hexadecanoyl-sn-glycero-3-phosphocholine + H2O = sn-glycerol 3-phosphocholine + hexadecanoate + H(+). It catalyses the reaction N-(acetyl)-sphing-4-enine + a 1,2-diacyl-sn-glycero-3-phosphoethanolamine = 1-O-acyl-N-(acetyl)-sphing-4-enine + a 2-acyl-sn-glycero-3-phosphoethanolamine. The enzyme catalyses 1-hexadecanoyl-2-(9Z-octadecenoyl)-sn-glycero-3-phosphoethanolamine + N-(acetyl)-sphing-4-enine = 2-(9Z-octadecenoyl)-sn-glycero-3-phosphoethanolamine + 1-hexadecanoyl-N-(acetyl)-sphing-4-enine. The catalysed reaction is 1-hexadecanoyl-2-(9Z,12Z-octadecadienoyl)-sn-glycero-3-phosphoethanolamine + N-(acetyl)-sphing-4-enine = 2-(9Z,12Z)-octadecadienoyl-sn-glycero-3-phosphoethanolamine + 1-hexadecanoyl-N-(acetyl)-sphing-4-enine. It carries out the reaction 1-hexadecanoyl-2-(5Z,8Z,11Z,14Z-eicosatetraenoyl)-sn-glycero-3-phosphoethanolamine + N-(acetyl)-sphing-4-enine = 2-(5Z,8Z,11Z,14Z)-eicosatetraenoyl-sn-glycero-3-phosphoethanolamine + 1-hexadecanoyl-N-(acetyl)-sphing-4-enine. It catalyses the reaction N-(acetyl)-sphing-4-enine + a 1,2-diacyl-sn-glycero-3-phosphoethanolamine = 1-O-acyl-N-(acetyl)-sphing-4-enine + a 1-acyl-sn-glycero-3-phosphoethanolamine. The enzyme catalyses 1-hexadecanoyl-2-(9Z-octadecenoyl)-sn-glycero-3-phosphoethanolamine + N-(acetyl)-sphing-4-enine = 1-(9Z-octadecenoyl)-N-(acetyl)-sphing-4-enine + 1-hexadecanoyl-sn-glycero-3-phosphoethanolamine. The catalysed reaction is 1-hexadecanoyl-2-(9Z,12Z-octadecadienoyl)-sn-glycero-3-phosphoethanolamine + N-(acetyl)-sphing-4-enine = 1-(9Z,12Z-octadecadienoyl)-N-acetylsphing-4-enine + 1-hexadecanoyl-sn-glycero-3-phosphoethanolamine. It carries out the reaction 1-hexadecanoyl-2-(5Z,8Z,11Z,14Z-eicosatetraenoyl)-sn-glycero-3-phosphoethanolamine + N-(acetyl)-sphing-4-enine = 1-(5Z,8Z,11Z,14Z)-eicosatetraenoyl-N-(acetyl)-sphing-4-enine + 1-hexadecanoyl-sn-glycero-3-phosphoethanolamine. It catalyses the reaction N-(acetyl)-sphing-4-enine + a 1,2-diacyl-sn-glycero-3-phosphocholine = 1-O-acyl-N-(acetyl)-sphing-4-enine + a 2-acyl-sn-glycero-3-phosphocholine. The enzyme catalyses 1-hexadecanoyl-2-(9Z-octadecenoyl)-sn-glycero-3-phosphocholine + N-(acetyl)-sphing-4-enine = 1-hexadecanoyl-N-(acetyl)-sphing-4-enine + 2-(9Z-octadecenoyl)-sn-glycero-3-phosphocholine. The catalysed reaction is 1-hexadecanoyl-2-(9Z,12Z-octadecadienoyl)-sn-glycero-3-phosphocholine + N-(acetyl)-sphing-4-enine = 2-(9Z,12Z-octadecadienoyl)-sn-glycero-3-phosphocholine + 1-hexadecanoyl-N-(acetyl)-sphing-4-enine. It carries out the reaction 1-hexadecanoyl-2-(5Z,8Z,11Z,14Z-eicosatetraenoyl)-sn-glycero-3-phosphocholine + N-(acetyl)-sphing-4-enine = 1-hexadecanoyl-N-(acetyl)-sphing-4-enine + 2-(5Z,8Z,11Z,14Z)-eicosatetraenoyl-sn-glycero-3-phosphocholine. It catalyses the reaction 1-hexadecanoyl-2-(4Z,7Z,10Z,13Z,16Z,19Z-docosahexaenoyl)-sn-glycero-3-phosphocholine + N-(acetyl)-sphing-4-enine = 2-(4Z,7Z,10Z,13Z,16Z,19Z-docosahexaenoyl)-sn-glycero-3-phosphocholine + 1-hexadecanoyl-N-(acetyl)-sphing-4-enine. The enzyme catalyses 1-hexadecanoyl-2-nonadioyl-sn-glycero-3-phosphocholine + N-(acetyl)-sphing-4-enine = 2-nonadioyl-sn-glycero-3-phosphocholine + 1-hexadecanoyl-N-(acetyl)-sphing-4-enine. The catalysed reaction is 1-octadecanoyl-2-(9Z-octadecenoyl)-sn-glycero-3-phosphocholine + N-(acetyl)-sphing-4-enine = 1-octadecanoyl-N-(acetyl)-sphing-4-enine + 2-(9Z-octadecenoyl)-sn-glycero-3-phosphocholine. It carries out the reaction 1-(9Z)-octadecenoyl-2-octadecanoyl-sn-glycero-3-phosphocholine + N-(acetyl)-sphing-4-enine = 2-octadecanoyl-sn-glycero-3-phosphocholine + 1-(9Z-octadecenoyl)-N-(acetyl)-sphing-4-enine. It catalyses the reaction 1-octadecanoyl-2-(5Z,8Z,11Z,14Z-eicosatetraenoyl)-sn-glycero-3-phosphocholine + N-(acetyl)-sphing-4-enine = 1-octadecanoyl-N-(acetyl)-sphing-4-enine + 2-(5Z,8Z,11Z,14Z)-eicosatetraenoyl-sn-glycero-3-phosphocholine. The enzyme catalyses 1-(9Z-octadecenoyl)-2-hexadecanoyl-sn-glycero-3-phosphocholine + N-(acetyl)-sphing-4-enine = 1-(9Z-octadecenoyl)-N-(acetyl)-sphing-4-enine + 2-hexadecanoyl-sn-glycero-3-phosphocholine. The catalysed reaction is N-(acetyl)-sphing-4-enine + a 1,2-diacyl-sn-glycero-3-phosphocholine = 1-O-acyl-N-(acetyl)-sphing-4-enine + a 1-acyl-sn-glycero-3-phosphocholine. It carries out the reaction 1-hexadecanoyl-2-(9Z-octadecenoyl)-sn-glycero-3-phosphocholine + N-(acetyl)-sphing-4-enine = 1-(9Z-octadecenoyl)-N-(acetyl)-sphing-4-enine + 1-hexadecanoyl-sn-glycero-3-phosphocholine. It catalyses the reaction 1-hexadecanoyl-2-(9Z,12Z-octadecadienoyl)-sn-glycero-3-phosphocholine + N-(acetyl)-sphing-4-enine = 1-(9Z,12Z-octadecadienoyl)-N-acetylsphing-4-enine + 1-hexadecanoyl-sn-glycero-3-phosphocholine. The enzyme catalyses 1-hexadecanoyl-2-(5Z,8Z,11Z,14Z-eicosatetraenoyl)-sn-glycero-3-phosphocholine + N-(acetyl)-sphing-4-enine = 1-(5Z,8Z,11Z,14Z)-eicosatetraenoyl-N-(acetyl)-sphing-4-enine + 1-hexadecanoyl-sn-glycero-3-phosphocholine. The catalysed reaction is 1-hexadecanoyl-2-(4Z,7Z,10Z,13Z,16Z,19Z-docosahexaenoyl)-sn-glycero-3-phosphocholine + N-(acetyl)-sphing-4-enine = 1-(4Z,7Z,10Z,13Z,16Z,19Z-docosahexaenoyl)-N-(acetyl)-sphing-4-enine + 1-hexadecanoyl-sn-glycero-3-phosphocholine. It carries out the reaction 1-octadecanoyl-2-(9Z-octadecenoyl)-sn-glycero-3-phosphocholine + N-(acetyl)-sphing-4-enine = 1-(9Z-octadecenoyl)-N-(acetyl)-sphing-4-enine + 1-octadecanoyl-sn-glycero-3-phosphocholine. It catalyses the reaction 1-octadecanoyl-2-(9Z,12Z)-octadecadienoyl-sn-glycero-3-phosphocholine + N-(acetyl)-sphing-4-enine = 1-(9Z,12Z-octadecadienoyl)-N-acetylsphing-4-enine + 1-octadecanoyl-sn-glycero-3-phosphocholine. The enzyme catalyses 1-(9Z-octadecenoyl)-2-hexadecanoyl-sn-glycero-3-phosphocholine + N-(acetyl)-sphing-4-enine = 1-hexadecanoyl-N-(acetyl)-sphing-4-enine + 1-(9Z-octadecenoyl)-sn-glycero-3-phosphocholine. The catalysed reaction is 1-(9Z)-octadecenoyl-2-octadecanoyl-sn-glycero-3-phosphocholine + N-(acetyl)-sphing-4-enine = 1-octadecanoyl-N-(acetyl)-sphing-4-enine + 1-(9Z-octadecenoyl)-sn-glycero-3-phosphocholine. It carries out the reaction 1,2-di-(9Z-octadecenoyl)-sn-glycero-3-phosphocholine + N-(acetyl)-sphing-4-enine = 1-(9Z-octadecenoyl)-N-(acetyl)-sphing-4-enine + 1-(9Z-octadecenoyl)-sn-glycero-3-phosphocholine. It catalyses the reaction 1-octadecanoyl-2-(5Z,8Z,11Z,14Z-eicosatetraenoyl)-sn-glycero-3-phosphocholine + N-(acetyl)-sphing-4-enine = 1-(5Z,8Z,11Z,14Z)-eicosatetraenoyl-N-(acetyl)-sphing-4-enine + 1-octadecanoyl-sn-glycero-3-phosphocholine. The enzyme catalyses a 1,2-diacyl-sn-glycero-3-phospho-L-serine + N-(acetyl)-sphing-4-enine = a 2-acyl-sn-glycero-3-phospho-L-serine + 1-O-acyl-N-(acetyl)-sphing-4-enine. The catalysed reaction is 1-octadecanoyl-2-(9Z-octadecenoyl)-sn-glycero-3-phospho-L-serine + N-(acetyl)-sphing-4-enine = 2-(9Z-octadecenoyl)-sn-glycero-3-phospho-L-serine + 1-octadecanoyl-N-(acetyl)-sphing-4-enine. It carries out the reaction a 1,2-diacyl-sn-glycero-3-phospho-L-serine + N-(acetyl)-sphing-4-enine = 1-O-acyl-N-(acetyl)-sphing-4-enine + a 1-acyl-sn-glycero-3-phospho-L-serine. It catalyses the reaction 1-octadecanoyl-2-(9Z-octadecenoyl)-sn-glycero-3-phospho-L-serine + N-(acetyl)-sphing-4-enine = 1-octadecanoyl-sn-glycero-3-phosphoserine + 1-(9Z-octadecenoyl)-N-(acetyl)-sphing-4-enine. The enzyme catalyses a 1,2-diacyl-sn-glycero-3-phospho-(1'-sn-glycerol) + N-(acetyl)-sphing-4-enine = 2-acyl-sn-glycero-3-phospho-(1'-sn-glycerol) + 1-O-acyl-N-(acetyl)-sphing-4-enine. The catalysed reaction is 1-octadecanoyl-2-(9Z-octadecenoyl)-sn-glycero-3-phospho-(1'-sn-glycerol) + N-(acetyl)-sphing-4-enine = 2-(9Z-octadecenoyl)-sn-glycero-3-phospho-(1'-sn-glycerol) + 1-octadecanoyl-N-(acetyl)-sphing-4-enine. It carries out the reaction a 1,2-diacyl-sn-glycero-3-phospho-(1'-sn-glycerol) + N-(acetyl)-sphing-4-enine = 1-O-acyl-N-(acetyl)-sphing-4-enine + 1-acyl-sn-glycero-3-phospho-(1'-sn-glycerol). It catalyses the reaction 1-octadecanoyl-2-(9Z-octadecenoyl)-sn-glycero-3-phospho-(1'-sn-glycerol) + N-(acetyl)-sphing-4-enine = 1-octadecanoyl-sn-glycero-3-phospho-(1'-sn-glycerol) + 1-(9Z-octadecenoyl)-N-(acetyl)-sphing-4-enine. The enzyme catalyses an N-acylethanolamine + a 1,2-diacyl-sn-glycero-3-phosphocholine = 2-(acylamino)ethyl fatty acid + a 2-acyl-sn-glycero-3-phosphocholine. The catalysed reaction is an N-acylethanolamine + a 1,2-diacyl-sn-glycero-3-phosphocholine = 2-(acylamino)ethyl fatty acid + a 1-acyl-sn-glycero-3-phosphocholine. It carries out the reaction N-(5Z,8Z,11Z,14Z-eicosatetraenoyl)-ethanolamine + 1,2-di-(9Z-octadecenoyl)-sn-glycero-3-phosphocholine = 2-[(5Z,8Z,11Z,14Z)-eicosatetraenoylamino]ethyl (9Z)-octadecenoate + (9Z-octadecenoyl)-sn-glycero-3-phosphocholine. It catalyses the reaction N-(9Z-octadecenoyl) ethanolamine + 1,2-di-(9Z-octadecenoyl)-sn-glycero-3-phosphocholine = 2-[(9Z)-octadecenoylamino]ethyl (9Z)-octadecenoate + (9Z-octadecenoyl)-sn-glycero-3-phosphocholine. The enzyme catalyses a 3-acyl-sn-glycerol + a 1,2-diacyl-sn-glycero-3-phosphocholine = a 1,3-diacylglycerol + a 1-acyl-sn-glycero-3-phosphocholine. The catalysed reaction is a 3-acyl-sn-glycerol + a 1,2-diacyl-sn-glycero-3-phosphocholine = a 1,3-diacylglycerol + a 2-acyl-sn-glycero-3-phosphocholine. It carries out the reaction 3-(9Z-octadecenoyl)-sn-glycerol + 1,2-di-(9Z-octadecenoyl)-sn-glycero-3-phosphocholine = 1,3-di-(9Z-octadecenoyl)-glycerol + (9Z-octadecenoyl)-sn-glycero-3-phosphocholine. It catalyses the reaction 3-hexadecanoyl-sn-glycerol + 1,2-di-(9Z-octadecenoyl)-sn-glycero-3-phosphocholine = 1-(9Z)-octadecenoyl-3-hexadecanoyl-sn-glycerol + (9Z-octadecenoyl)-sn-glycero-3-phosphocholine. The enzyme catalyses a 1-acyl-sn-glycerol + a 1,2-diacyl-sn-glycero-3-phosphocholine = a 1,3-diacylglycerol + a 2-acyl-sn-glycero-3-phosphocholine. The catalysed reaction is a 1-acyl-sn-glycerol + a 1,2-diacyl-sn-glycero-3-phosphocholine = a 1,3-diacylglycerol + a 1-acyl-sn-glycero-3-phosphocholine. It carries out the reaction 1-(9Z-octadecenoyl)-sn-glycerol + 1,2-di-(9Z-octadecenoyl)-sn-glycero-3-phosphocholine = 1,3-di-(9Z-octadecenoyl)-glycerol + (9Z-octadecenoyl)-sn-glycero-3-phosphocholine. It catalyses the reaction 1-hexadecanoyl-sn-glycerol + 1,2-di-(9Z-octadecenoyl)-sn-glycero-3-phosphocholine = 1-hexadecanoyl-3-(9Z)-octadecenoyl-sn-glycerol + (9Z-octadecenoyl)-sn-glycero-3-phosphocholine. The enzyme catalyses a 2-acylglycerol + a 1,2-diacyl-sn-glycero-3-phosphocholine = a 1,2-diacylglycerol + a 2-acyl-sn-glycero-3-phosphocholine. The catalysed reaction is a 2-acylglycerol + a 1,2-diacyl-sn-glycero-3-phosphocholine = a 1,2-diacylglycerol + a 1-acyl-sn-glycero-3-phosphocholine. It carries out the reaction 2-hexadecanoylglycerol + 1,2-di-(9Z-octadecenoyl)-sn-glycero-3-phosphocholine = 1-(9Z)-octadecenoyl-2-hexadecanoylglycerol + (9Z-octadecenoyl)-sn-glycero-3-phosphocholine. It catalyses the reaction 1-O-alkylglycerol + a 1,2-diacyl-sn-glycero-3-phosphocholine = 1-O-alkyl-3-acylglycerol + a 1-acyl-sn-glycero-3-phosphocholine. The enzyme catalyses 1-O-alkylglycerol + a 1,2-diacyl-sn-glycero-3-phosphocholine = 1-O-alkyl-3-acylglycerol + a 2-acyl-sn-glycero-3-phosphocholine. The catalysed reaction is 1-O-hexadecylglycerol + 1,2-di-(9Z-octadecenoyl)-sn-glycero-3-phosphocholine = 1-O-hexadecyl-3-(9Z)-octadecenoylglycerol + (9Z-octadecenoyl)-sn-glycero-3-phosphocholine. It carries out the reaction 1-O-alkyl-2-acyl-sn-glycerol + a 1,2-diacyl-sn-glycero-3-phosphocholine = 1-O-alkyl-2,3-diacyl-sn-glycerol + a 2-acyl-sn-glycero-3-phosphocholine. It catalyses the reaction 1-O-alkyl-2-acyl-sn-glycerol + a 1,2-diacyl-sn-glycero-3-phosphocholine = 1-O-alkyl-2,3-diacyl-sn-glycerol + a 1-acyl-sn-glycero-3-phosphocholine. The enzyme catalyses 1-O-hexadecyl-2-acetyl-sn-glycerol + 1,2-di-(9Z-octadecenoyl)-sn-glycero-3-phosphocholine = 1-O-hexadecyl-2-acetyl-3-(9Z)-octadecenoyl-sn-glycerol + (9Z-octadecenoyl)-sn-glycero-3-phosphocholine. The catalysed reaction is 1-O-hexadecyl-2-O-methyl-sn-glycerol + 1,2-di-(9Z-octadecenoyl)-sn-glycero-3-phosphocholine = 1-O-hexadecyl-2-O-methyl-3-(9Z)-octadecenoyl-sn-glycerol + (9Z-octadecenoyl)-sn-glycero-3-phosphocholine. It carries out the reaction a 1,2-diacyl-sn-glycero-3-phosphoethanolamine + H2O = a 1-acyl-sn-glycero-3-phosphoethanolamine + a fatty acid + H(+). It catalyses the reaction 1-acyl-2-(5Z,8Z,11Z,14Z)-eicosatetraenoyl-sn-glycero-3-phosphoethanolamine + H2O = a 1-acyl-sn-glycero-3-phosphoethanolamine + (5Z,8Z,11Z,14Z)-eicosatetraenoate + H(+). The enzyme catalyses a 1,2-diacyl-sn-glycero-3-phospho-(1'-sn-glycerol) + H2O = 1-acyl-sn-glycero-3-phospho-(1'-sn-glycerol) + a fatty acid + H(+). The catalysed reaction is 1-hexadecanoyl-2-(9Z-octadecenoyl)-sn-glycero-3-phospho-(1'-sn-glycerol) + H2O = 1-hexadecanoyl-sn-glycero-3-phospho-(1'-sn-glycerol) + (9Z)-octadecenoate + H(+). It carries out the reaction a 1,2-diacyl-sn-glycero-3-phospho-(1'-sn-glycerol) + H2O = 2-acyl-sn-glycero-3-phospho-(1'-sn-glycerol) + a fatty acid + H(+). It catalyses the reaction 1-hexadecanoyl-2-(9Z-octadecenoyl)-sn-glycero-3-phospho-(1'-sn-glycerol) + H2O = 2-(9Z-octadecenoyl)-sn-glycero-3-phospho-(1'-sn-glycerol) + hexadecanoate + H(+). Its activity is regulated as follows. Transacylase activity is inhibited by MJ33. Functionally, has dual calcium-independent phospholipase and O-acyltransferase activities with a potential role in glycerophospholipid homeostasis and remodeling of acyl groups of lipophilic alcohols present in acidic cellular compartments. Catalyzes hydrolysis of the ester bond of the fatty acyl group attached at sn-1 or sn-2 position of phospholipids (phospholipase A1 or A2 activity) and transfer it to the hydroxyl group at the first carbon of lipophilic alcohols (O-acyltransferase activity). Among preferred fatty acyl donors are phosphatidylcholines, phosphatidylethanolamines, phosphatidylglycerols and phosphatidylserines. Favors sn-2 over sn-1 deacylation of unsaturated fatty acyl groups of phosphatidylcholines, phosphatidylethanolamines, and phosphatidylglycerols. Among preferred fatty acyl acceptors are natural lipophilic alcohols including short-chain ceramide N-acetyl-sphingosine (C2 ceramide), alkylacylglycerols, monoacylglycerols, and acylethanolamides such as anandamide and oleoylethanolamide. Selectively hydrolyzes the sn-1 fatty acyl group of truncated oxidized phospholipids and may play a role in detoxification of reactive oxidized phospholipids during oxidative stress. Required for normal phospholipid degradation in alveolar macrophages with potential implications in the clearance of pulmonary surfactant, which is mainly composed of dipalmitoylphosphatidylcholine (1,2-dihexadecanoyl-sn-glycero-3-phosphocholine). Involved in the first step of bis(monoacylglycero)phosphate (BMP) de novo synthesis from phosphatidylglycerol (1,2-diacyl-sn-glycero-3-phospho-(1'-sn-glycerol), PG). BMP is an important player in cargo sorting and degradation, regulation of cellular cholesterol levels and intercellular communication. At neutral pH, hydrolyzes the sn-1 fatty acyl group of the lysophosphatidylcholines. This chain is Lysosomal phospholipase A and acyltransferase (Pla2g15), found in Rattus norvegicus (Rat).